The sequence spans 219 residues: 2-hydroxy-3-keto-5-methylthiopentenyl-1-phosphate phosphatase (219 aa).

It belongs to the HAD-like hydrolase superfamily. MtnX family.

The enzyme catalyses 2-hydroxy-5-methylsulfanyl-3-oxopent-1-enyl phosphate + H2O = 1,2-dihydroxy-5-(methylsulfanyl)pent-1-en-3-one + phosphate. The protein operates within amino-acid biosynthesis; L-methionine biosynthesis via salvage pathway; L-methionine from S-methyl-5-thio-alpha-D-ribose 1-phosphate: step 4/6. Functionally, dephosphorylates 2-hydroxy-3-keto-5-methylthiopentenyl-1-phosphate (HK-MTPenyl-1-P) yielding 1,2-dihydroxy-3-keto-5-methylthiopentene (DHK-MTPene). The sequence is that of 2-hydroxy-3-keto-5-methylthiopentenyl-1-phosphate phosphatase from Bacillus cereus (strain 03BB102).